Consider the following 217-residue polypeptide: Trimethylamine corrinoid protein 2 (217 aa).

The 92-residue stretch at 1-92 (MAGKEEIIAK…EMEKRKAKTT (92 aa)) folds into the B12-binding N-terminal domain. The 124-residue stretch at 94–217 (LGTVIIGTIE…VNKIKAAIKS (124 aa)) folds into the B12-binding domain. Residue His-107 participates in methylcob(III)alamin binding.

This sequence belongs to the methylamine corrinoid protein family. As to quaternary structure, can form a complex with MttB.

It functions in the pathway one-carbon metabolism; methanogenesis from trimethylamine. In terms of biological role, acts probably as a methyl group carrier between MttB and either MtbA or MtaA. The polypeptide is Trimethylamine corrinoid protein 2 (mttC2) (Methanosarcina acetivorans (strain ATCC 35395 / DSM 2834 / JCM 12185 / C2A)).